We begin with the raw amino-acid sequence, 277 residues long: Large ribosomal subunit protein uL2c (277 aa).

2 disordered regions span residues 24–57 and 226–266; these read IVQS…RGGG and NAAD…HKYS.

The protein belongs to the universal ribosomal protein uL2 family. In terms of assembly, part of the 50S ribosomal subunit.

It is found in the plastid. It localises to the chloroplast. This chain is Large ribosomal subunit protein uL2c (rpl2), found in Zygnema circumcarinatum (Green alga).